Reading from the N-terminus, the 202-residue chain is NADH-quinone oxidoreductase subunit B (202 aa).

Positions 81, 82, 146, and 176 each coordinate [4Fe-4S] cluster.

Belongs to the complex I 20 kDa subunit family. In terms of assembly, NDH-1 is composed of 14 different subunits. Subunits NuoB, C, D, E, F, and G constitute the peripheral sector of the complex. The cofactor is [4Fe-4S] cluster.

Its subcellular location is the cell inner membrane. The catalysed reaction is a quinone + NADH + 5 H(+)(in) = a quinol + NAD(+) + 4 H(+)(out). Its function is as follows. NDH-1 shuttles electrons from NADH, via FMN and iron-sulfur (Fe-S) centers, to quinones in the respiratory chain. The immediate electron acceptor for the enzyme in this species is believed to be ubiquinone. Couples the redox reaction to proton translocation (for every two electrons transferred, four hydrogen ions are translocated across the cytoplasmic membrane), and thus conserves the redox energy in a proton gradient. The protein is NADH-quinone oxidoreductase subunit B of Bradyrhizobium diazoefficiens (strain JCM 10833 / BCRC 13528 / IAM 13628 / NBRC 14792 / USDA 110).